Reading from the N-terminus, the 489-residue chain is DBIRD complex subunit ZNF326 (489 aa).

Disordered regions lie at residues 1 to 28, 62 to 100, 133 to 181, and 205 to 263; these read MDRE…EMGD, EQGH…PSFT, VGSR…RPGL, and PPFK…KNSE. Residues 7 to 22 are compositionally biased toward polar residues; that stretch reads SYNQRSMDSYGNQSYS. Positions 62–76 are enriched in basic and acidic residues; it reads EQGHFGDSYDGRYEN. Positions 91 to 100 are enriched in polar residues; sequence GGSSWDPSFT. Residues 200–221 carry the Bipartite nuclear localization signal motif; that stretch reads KRKMAPPFKPVGVFGKKQKLSK. C2H2 AKAP95-type zinc fingers lie at residues 273–295 and 365–388; these read CSFC…STTH and CSAC…SADH. The segment at 431 to 489 is disordered; sequence ETQPEEQQQEQEEEEEEEEQQEQAAVPEQDLSEEQPAAIAAEPEGEDFTCDPLTTTDEV. Residues 433–451 are compositionally biased toward acidic residues; the sequence is QPEEQQQEQEEEEEEEEQQ.

The protein belongs to the AKAP95 family. As to quaternary structure, component of the DBIRD complex.

It localises to the nucleus. Functionally, core component of the DBIRD complex, a multiprotein complex that acts at the interface between core mRNP particles and RNA polymerase II (RNAPII) and integrates transcript elongation with the regulation of alternative splicing. The chain is DBIRD complex subunit ZNF326 (znf326) from Xenopus tropicalis (Western clawed frog).